We begin with the raw amino-acid sequence, 330 residues long: Probable L-lactate dehydrogenase (330 aa).

Substrate-binding residues include R105, N137, and R168. Position 137 (N137) interacts with NAD(+). H192 (proton acceptor) is an active-site residue.

The protein belongs to the LDH/MDH superfamily. LDH family. Homotetramer.

Its subcellular location is the cytoplasm. It catalyses the reaction (S)-lactate + NAD(+) = pyruvate + NADH + H(+). The protein operates within fermentation; pyruvate fermentation to lactate; (S)-lactate from pyruvate: step 1/1. The polypeptide is Probable L-lactate dehydrogenase (Schizosaccharomyces pombe (strain 972 / ATCC 24843) (Fission yeast)).